The primary structure comprises 306 residues: Phospho-N-acetylmuramoyl-pentapeptide-transferase (306 aa).

The next 10 helical transmembrane spans lie at 1–21 (MDIYSAATLLAEFVLGIIIFP), 49–69 (GTPTAGGIVFISLTVIAGLIL), 75–95 (LIFTLLFYGFIGFLDDFVSIV), 104–124 (AWQKLALQFLFSIWIAYTILQ), 130–150 (IFGITVPSWLFYLFTMLLVSG), 160–180 (GIDGLAGWVFVTSMIPFMFFS), 182–202 (SSMEYKAIFVIIMPLLSFLVY), 209–229 (VFMGDTGSLALGAYISTYALM), 234–254 (LSLLFFTPIFLLETISVILQV), and 284–304 (IVGVFSAWNLAIAIFYIAFFL).

It belongs to the glycosyltransferase 4 family. MraY subfamily. Requires Mg(2+) as cofactor.

It localises to the cell inner membrane. It carries out the reaction UDP-N-acetyl-alpha-D-muramoyl-L-alanyl-gamma-D-glutamyl-meso-2,6-diaminopimeloyl-D-alanyl-D-alanine + di-trans,octa-cis-undecaprenyl phosphate = di-trans,octa-cis-undecaprenyl diphospho-N-acetyl-alpha-D-muramoyl-L-alanyl-D-glutamyl-meso-2,6-diaminopimeloyl-D-alanyl-D-alanine + UMP. It participates in cell wall biogenesis; peptidoglycan biosynthesis. Functionally, catalyzes the initial step of the lipid cycle reactions in the biosynthesis of the cell wall peptidoglycan: transfers peptidoglycan precursor phospho-MurNAc-pentapeptide from UDP-MurNAc-pentapeptide onto the lipid carrier undecaprenyl phosphate, yielding undecaprenyl-pyrophosphoryl-MurNAc-pentapeptide, known as lipid I. The polypeptide is Phospho-N-acetylmuramoyl-pentapeptide-transferase (Fervidobacterium nodosum (strain ATCC 35602 / DSM 5306 / Rt17-B1)).